The chain runs to 660 residues: MFSTAASPYDDLVIKATDENLASEDWALNMDVCDKVSSDGQNGARQAVTALQKRLSHRNPNVQIYALELANSLAQNCGKDLLGELSSRNWTSALDRLINDRATSTPVKKKALSFVKSWAKQIEETGDPNLGLMGELYDQLRAKNHVFDEPEPTPESAEEVRRRQEEEELQRVLELSKQDKGGRSLFTYQPSGSAGASSSSAANNNTSPSIPQSQAQPLAQDQAQSQAAPQVTGYAPQPQKIYSPQPLEPEPPRVDLNTATRVRAIYPFTGQEVGELDFERGDVIKVLDRGFKEWWRGACNGKIGIFPVTYVEALPEPTPKELQEKAQEEARVFASLGLVDQLLQTLKGIDPARGDKLDDHPEIEEMYQASVALQGQINTLIKKYSDQKAELEHMNANFIRAMGQYEELRNGPPLVQAQPFGYVPPQPQPLLQQQNSYSYQQYPQQPQQQPQPYAQAPYAQQAQPQLQPEQYAQQTPSPAAQSQASYTAQQQPYPAQVQQDPAAASPPPNQPFYHHGGSTTSVNRIPSAQTAVQPQPHGAPSFPPSSPPTRQVTEPGVAGLGAGDQQAWDQYYQQHGQQAPHSSQHPSQPQSQPQSQPQSQPQSQQGSYYPAHAQAQGYQAAYATVPDGRAYASPPLPGTQQGQGVEGVTAGMDRMSVHAP.

Residues 16 to 148 form the VHS domain; sequence ATDENLASED…QLRAKNHVFD (133 aa). The segment at 146-254 is disordered; it reads VFDEPEPTPE…QPLEPEPPRV (109 aa). Residues 158-182 are compositionally biased toward basic and acidic residues; it reads EEVRRRQEEEELQRVLELSKQDKGG. The 20-residue stretch at 164–183 folds into the UIM domain; that stretch reads QEEEELQRVLELSKQDKGGR. A compositionally biased stretch (low complexity) spans 190–230; sequence PSGSAGASSSSAANNNTSPSIPQSQAQPLAQDQAQSQAAPQ. Residues 257 to 316 form the SH3 domain; the sequence is NTATRVRAIYPFTGQEVGELDFERGDVIKVLDRGFKEWWRGACNGKIGIFPVTYVEALPE. Positions 437-503 are enriched in low complexity; that stretch reads YSYQQYPQQP…PAQVQQDPAA (67 aa). The disordered stretch occupies residues 437–660; that stretch reads YSYQQYPQQP…GMDRMSVHAP (224 aa). A compositionally biased stretch (polar residues) spans 517–533; the sequence is GSTTSVNRIPSAQTAVQ. Composition is skewed to low complexity over residues 573–623 and 638–651; these read QQHG…AAYA and GTQQ…VTAG.

The protein belongs to the STAM family. In terms of assembly, component of the ESCRT-0 complex composed of HSE1 and VPS27.

It localises to the endosome membrane. In terms of biological role, component of the ESCRT-0 complex which is the sorting receptor for ubiquitinated cargo proteins at the multivesicular body (MVB). The chain is Class E vacuolar protein-sorting machinery protein HSE1 (HSE1) from Cryptococcus neoformans var. neoformans serotype D (strain JEC21 / ATCC MYA-565) (Filobasidiella neoformans).